The primary structure comprises 113 residues: Large ribosomal subunit protein bL19 (113 aa).

The protein belongs to the bacterial ribosomal protein bL19 family.

Its function is as follows. This protein is located at the 30S-50S ribosomal subunit interface and may play a role in the structure and function of the aminoacyl-tRNA binding site. The chain is Large ribosomal subunit protein bL19 from Carboxydothermus hydrogenoformans (strain ATCC BAA-161 / DSM 6008 / Z-2901).